The chain runs to 193 residues: Ubiquitin-conjugating enzyme E2 E1 (193 aa).

Positions 1–45 (MSDDDSRASTSSSSSSSSNQQTEKEGSTPKKKESKVSMSKNSKLL) are disordered. Ser2 bears the N-acetylserine mark. A compositionally biased stretch (low complexity) spans 8–18 (ASTSSSSSSSS). The segment covering 22–35 (TEKEGSTPKKKESK) has biased composition (basic and acidic residues). Residues 36-45 (VSMSKNSKLL) show a composition bias toward polar residues. A UBC core domain is found at 47–193 (TSAKRIQKEL…ARQWTKRYAT (147 aa)). Residue Cys131 is the Glycyl thioester intermediate of the active site. Lys136 is covalently cross-linked (Glycyl lysine isopeptide (Lys-Gly) (interchain with G-Cter in ISG15)).

It belongs to the ubiquitin-conjugating enzyme family. In terms of assembly, interacts with RNF14. ISGylation suppresses ubiquitin E2 enzyme activity. Post-translationally, autoubiquitinated.

It localises to the nucleus. The catalysed reaction is S-ubiquitinyl-[E1 ubiquitin-activating enzyme]-L-cysteine + [E2 ubiquitin-conjugating enzyme]-L-cysteine = [E1 ubiquitin-activating enzyme]-L-cysteine + S-ubiquitinyl-[E2 ubiquitin-conjugating enzyme]-L-cysteine.. It carries out the reaction S-ubiquitinyl-[E1 ubiquitin-activating enzyme]-L-cysteine + [acceptor protein]-L-lysine = [E1 ubiquitin-activating enzyme]-L-cysteine + N(6)-monoubiquitinyl-[acceptor protein]-L-lysine.. It functions in the pathway protein modification; protein ubiquitination. In terms of biological role, accepts ubiquitin from the E1 complex and catalyzes its covalent attachment to other proteins. Catalyzes the covalent attachment of ISG15 to other proteins. Mediates the selective degradation of short-lived and abnormal proteins. In vitro also catalyzes 'Lys-48'-linked polyubiquitination. The sequence is that of Ubiquitin-conjugating enzyme E2 E1 (Ube2e1) from Mus musculus (Mouse).